Reading from the N-terminus, the 181-residue chain is Acetolactate synthase small subunit (181 aa).

Residues 4–78 form the ACT domain; that stretch reads TLSVLVEDES…NVLKIQDITN (75 aa).

This sequence belongs to the acetolactate synthase small subunit family. In terms of assembly, dimer of large and small chains.

It is found in the plastid. It localises to the chloroplast. The enzyme catalyses 2 pyruvate + H(+) = (2S)-2-acetolactate + CO2. The protein operates within amino-acid biosynthesis; L-isoleucine biosynthesis; L-isoleucine from 2-oxobutanoate: step 1/4. It participates in amino-acid biosynthesis; L-valine biosynthesis; L-valine from pyruvate: step 1/4. The polypeptide is Acetolactate synthase small subunit (ilvH) (Galdieria sulphuraria (Red alga)).